The primary structure comprises 151 residues: Small ribosomal subunit protein bS6 (151 aa).

The disordered stretch occupies residues 97 to 151 (EAEPSAMMQKRDRDDRKDRDRGDRPRRRDDDFGGGDRGDRGDRGDRPERNFGGEN). Positions 105–151 (QKRDRDDRKDRDRGDRPRRRDDDFGGGDRGDRGDRGDRPERNFGGEN) are enriched in basic and acidic residues.

Belongs to the bacterial ribosomal protein bS6 family.

Its function is as follows. Binds together with bS18 to 16S ribosomal RNA. The sequence is that of Small ribosomal subunit protein bS6 from Methylorubrum extorquens (strain CM4 / NCIMB 13688) (Methylobacterium extorquens).